The following is a 60-amino-acid chain: UPF0434 protein Aave_2563 (60 aa).

The protein belongs to the UPF0434 family.

The protein is UPF0434 protein Aave_2563 of Paracidovorax citrulli (strain AAC00-1) (Acidovorax citrulli).